The primary structure comprises 100 residues: NADH-quinone oxidoreductase subunit K (100 aa).

The next 3 helical transmembrane spans lie at 4-24 (LSHGLILAAILFVLGLTGMII), 28-48 (LLFMLLGLEIMINASALAFVV), and 60-80 (VMYILAVTLAAAEASIGLALL).

The protein belongs to the complex I subunit 4L family. As to quaternary structure, NDH-1 is composed of 13 different subunits. Subunits NuoA, H, J, K, L, M, N constitute the membrane sector of the complex.

It is found in the cell inner membrane. The enzyme catalyses a quinone + NADH + 5 H(+)(in) = a quinol + NAD(+) + 4 H(+)(out). NDH-1 shuttles electrons from NADH, via FMN and iron-sulfur (Fe-S) centers, to quinones in the respiratory chain. The immediate electron acceptor for the enzyme in this species is believed to be ubiquinone. Couples the redox reaction to proton translocation (for every two electrons transferred, four hydrogen ions are translocated across the cytoplasmic membrane), and thus conserves the redox energy in a proton gradient. The sequence is that of NADH-quinone oxidoreductase subunit K from Sodalis glossinidius (strain morsitans).